Here is a 38-residue protein sequence, read N- to C-terminus: Potassium channel toxin alpha-KTx 2.21 (38 aa).

3 disulfides stabilise this stretch: C7–C29, C13–C34, and C17–C36.

Expressed by the venom gland.

The protein localises to the secreted. Functionally, inhibits human voltage-gated potassium (Kv) channels Kv1.2/KCNA2 and Kv1.3/KCNA3. Does not block human Kv1.1/KCNA1 at 100nM concentration. This chain is Potassium channel toxin alpha-KTx 2.21, found in Centruroides bonito (Scorpion).